A 149-amino-acid polypeptide reads, in one-letter code: Protein FAM72A (149 aa).

This sequence belongs to the FAM72 family. Interacts with UNG. As to expression, expressed at high levels in stomach and also in kidney and, at low levels, in heart (at protein level). In the stomach, highly expressed in foveolar cells, parietal cells and chief cells (at protein level). In kidney, expressed in endothelial cells, mesangial and epithelial cells (parietal and visceral epithelium) around glomerulus (at protein level).

It localises to the cytoplasm. The protein resides in the mitochondrion. In terms of biological role, may play a role in the regulation of cellular reactive oxygen species metabolism. May participate in cell growth regulation. The polypeptide is Protein FAM72A (FAM72A) (Bos taurus (Bovine)).